The following is a 296-amino-acid chain: Diguanylate cyclase DgcZ (296 aa).

Residues histidine 22, cysteine 52, histidine 79, and histidine 83 each contribute to the Zn(2+) site. The 133-residue stretch at 157–289 (LNLYLMLLDI…GRNRCMFIDE (133 aa)) folds into the GGDEF domain. The Mg(2+) site is built by aspartate 165 and isoleucine 166. Residues asparagine 173, histidine 178, aspartate 182, and 195–200 (WTRDYE) contribute to the substrate site. Residue glutamate 208 coordinates Mg(2+). Glutamate 208 serves as the catalytic Proton acceptor. 3 residues coordinate substrate: lysine 215, arginine 224, and arginine 228.

As to quaternary structure, homodimer. The cofactor is Mg(2+).

It catalyses the reaction 2 GTP = 3',3'-c-di-GMP + 2 diphosphate. The protein operates within purine metabolism; 3',5'-cyclic di-GMP biosynthesis. Its activity is regulated as follows. Allosterically regulated by zinc, which seems to regulate the activity of the catalytic GGDEF domains by impeding their mobility and thus preventing productive encounter of the two GTP substrates. Subject to product inhibition by c-di-GMP at a KI of 44 uM. Catalyzes the synthesis of cyclic-di-GMP (c-di-GMP) via the condensation of 2 GTP molecules. May act as a zinc sensor that controls, via c-di-GMP, post-translational events. Overexpression leads to a strong repression of swimming; swimming returnes to normal when residues 206-207 are both mutated to Ala. Overexpression also leads to a reduction in flagellar abundance and a 20-fold increase in c-di-GMP levels in vivo. Required for aminoglycoside-mediated induction of biofilm formation, it also plays a lesser role in biofilm production in response to other classes of translation inhibitors. The c-di-GMP produced by this enzyme up-regulates poly-GlcNAc production as well as the biofilm synthesis protein PgaD, although c-di-GMP is probably not the main inducing principle. C-di-GMP is a second messenger which controls cell surface-associated traits in bacteria. The sequence is that of Diguanylate cyclase DgcZ from Escherichia coli (strain K12).